Here is a 203-residue protein sequence, read N- to C-terminus: Endothelin-1 (203 aa).

A signal peptide spans 1–25 (MDYFPMIIALLFVAFQGAPETAVLG). Residues 26-50 (AELSPEAESQGETPSPHASWRPRRS) constitute a propeptide that is removed on maturation. The tract at residues 27-48 (ELSPEAESQGETPSPHASWRPR) is disordered. Cystine bridges form between Cys-53-Cys-67 and Cys-55-Cys-63. A propeptide spanning residues 83-203 (YGLGSPSRSR…DKKVTHNRTH (121 aa)) is cleaved from the precursor. An endothelin-like region spans residues 110-124 (CQCASQKDKKCWSFC). Asn-200 carries an N-linked (GlcNAc...) asparagine glycan.

It belongs to the endothelin/sarafotoxin family.

It localises to the secreted. Its function is as follows. Endothelins are endothelium-derived vasoconstrictor peptides. Probable ligand for G-protein coupled receptors EDNRA and EDNRB which activates PTK2B, BCAR1, BCAR3 and, GTPases RAP1 and RHOA cascade in glomerular mesangial cells. Also binds the DEAR/FBXW7-AS1 receptor. Promotes mesenteric arterial wall remodeling via activation of ROCK signaling and subsequent colocalization of NFATC3 with F-actin filaments. NFATC3 then translocates to the nucleus where it subsequently promotes the transcription of the smooth muscle hypertrophy and differentiation marker ACTA2. This Sus scrofa (Pig) protein is Endothelin-1 (EDN1).